Here is a 227-residue protein sequence, read N- to C-terminus: Uracil-DNA glycosylase (227 aa).

The active-site Proton acceptor is the aspartate 64.

It belongs to the uracil-DNA glycosylase (UDG) superfamily. UNG family.

It localises to the cytoplasm. The catalysed reaction is Hydrolyzes single-stranded DNA or mismatched double-stranded DNA and polynucleotides, releasing free uracil.. Excises uracil residues from the DNA which can arise as a result of misincorporation of dUMP residues by DNA polymerase or due to deamination of cytosine. In Alkaliphilus metalliredigens (strain QYMF), this protein is Uracil-DNA glycosylase.